The sequence spans 282 residues: Bifunctional protein FolD (282 aa).

Residues 160–162 (NRS), Ser185, and Ile228 contribute to the NADP(+) site.

Belongs to the tetrahydrofolate dehydrogenase/cyclohydrolase family. In terms of assembly, homodimer.

It catalyses the reaction (6R)-5,10-methylene-5,6,7,8-tetrahydrofolate + NADP(+) = (6R)-5,10-methenyltetrahydrofolate + NADPH. It carries out the reaction (6R)-5,10-methenyltetrahydrofolate + H2O = (6R)-10-formyltetrahydrofolate + H(+). It functions in the pathway one-carbon metabolism; tetrahydrofolate interconversion. Functionally, catalyzes the oxidation of 5,10-methylenetetrahydrofolate to 5,10-methenyltetrahydrofolate and then the hydrolysis of 5,10-methenyltetrahydrofolate to 10-formyltetrahydrofolate. This Cenarchaeum symbiosum (strain A) protein is Bifunctional protein FolD.